Consider the following 529-residue polypeptide: Bifunctional purine biosynthesis protein PurH (529 aa).

The MGS-like domain occupies 1-148 (MQQRRPVRRA…KNHKDVAIVV (148 aa)).

It belongs to the PurH family.

It carries out the reaction (6R)-10-formyltetrahydrofolate + 5-amino-1-(5-phospho-beta-D-ribosyl)imidazole-4-carboxamide = 5-formamido-1-(5-phospho-D-ribosyl)imidazole-4-carboxamide + (6S)-5,6,7,8-tetrahydrofolate. The enzyme catalyses IMP + H2O = 5-formamido-1-(5-phospho-D-ribosyl)imidazole-4-carboxamide. It participates in purine metabolism; IMP biosynthesis via de novo pathway; 5-formamido-1-(5-phospho-D-ribosyl)imidazole-4-carboxamide from 5-amino-1-(5-phospho-D-ribosyl)imidazole-4-carboxamide (10-formyl THF route): step 1/1. Its pathway is purine metabolism; IMP biosynthesis via de novo pathway; IMP from 5-formamido-1-(5-phospho-D-ribosyl)imidazole-4-carboxamide: step 1/1. The protein is Bifunctional purine biosynthesis protein PurH of Salmonella agona (strain SL483).